We begin with the raw amino-acid sequence, 197 residues long: Lipoprotein signal peptidase (197 aa).

The next 2 membrane-spanning stretches (helical) occupy residues 73–93 and 97–117; these read SNAI…YLMI and TIGS…NLID. Catalysis depends on residues Asp126 and Asp144. The chain crosses the membrane as a helical span at residues 135-155; it reads YSFPVFNLADCFITIGVIILI.

Belongs to the peptidase A8 family.

Its subcellular location is the cell inner membrane. It carries out the reaction Release of signal peptides from bacterial membrane prolipoproteins. Hydrolyzes -Xaa-Yaa-Zaa-|-(S,diacylglyceryl)Cys-, in which Xaa is hydrophobic (preferably Leu), and Yaa (Ala or Ser) and Zaa (Gly or Ala) have small, neutral side chains.. Its pathway is protein modification; lipoprotein biosynthesis (signal peptide cleavage). Functionally, this protein specifically catalyzes the removal of signal peptides from prolipoproteins. The protein is Lipoprotein signal peptidase of Rickettsia felis (strain ATCC VR-1525 / URRWXCal2) (Rickettsia azadi).